The following is a 355-amino-acid chain: tRNA N6-adenosine threonylcarbamoyltransferase (355 aa).

2 residues coordinate Fe cation: H113 and H117. Substrate is bound by residues 135–139 (LASGG), D168, G181, and N279. Residue D307 coordinates Fe cation.

This sequence belongs to the KAE1 / TsaD family. It depends on Fe(2+) as a cofactor.

The protein localises to the cytoplasm. It carries out the reaction L-threonylcarbamoyladenylate + adenosine(37) in tRNA = N(6)-L-threonylcarbamoyladenosine(37) in tRNA + AMP + H(+). Its function is as follows. Required for the formation of a threonylcarbamoyl group on adenosine at position 37 (t(6)A37) in tRNAs that read codons beginning with adenine. Is involved in the transfer of the threonylcarbamoyl moiety of threonylcarbamoyl-AMP (TC-AMP) to the N6 group of A37, together with TsaE and TsaB. TsaD likely plays a direct catalytic role in this reaction. In Bradyrhizobium sp. (strain BTAi1 / ATCC BAA-1182), this protein is tRNA N6-adenosine threonylcarbamoyltransferase.